Consider the following 179-residue polypeptide: uncharacterized protein (179 aa).

Polar residues predominate over residues 1–10 (ATLSAGQPAS). 3 disordered regions span residues 1 to 35 (ATLS…RGKC), 59 to 80 (VRRN…PIVT), and 131 to 179 (ECPT…STCR). The segment covering 23–33 (LHRHPAPKRRG) has biased composition (basic residues). The span at 149–158 (TPSRVRRSRR) shows a compositional bias: basic residues.

This is an uncharacterized protein from Human cytomegalovirus (strain AD169) (HHV-5).